We begin with the raw amino-acid sequence, 462 residues long: DEK domain-containing chromatin-associated protein 1 (462 aa).

Disordered regions lie at residues 18–91 (AVTE…TQGR) and 212–390 (KETK…RKEL). The span at 20 to 32 (TEKDTETKKKDEV) shows a compositional bias: basic and acidic residues. Positions 33–46 (EKDEAMEEKGEEID) are enriched in acidic residues. Positions 77–91 (PRSSGNKPLSITQGR) are enriched in polar residues. Residues 267–276 (NGEDDVAPEE) show a composition bias toward acidic residues. 3 stretches are compositionally biased toward basic and acidic residues: residues 277–303 (ENNKSEDTETEDEKDKAKEKTKSTDKK), 312–322 (EKPAAEEEKSI), and 347–360 (QKVDKDDSSKEKGK). The short motif at 344 to 351 (SKKQKVDK) is the Nuclear localization signal element. The DEK-C domain occupies 384 to 439 (EPTRKELHVVVTKILKEVDFNTATLSDILRKLGSHFGIDLMHRKAEVKDIITDAIN). DNA-binding regions lie at residues 402–416 (DFNTATLSDILRKLG) and 431–435 (KDIIT). Positions 438–462 (INEMSDDDDEKEEDTEDEGEKEGKD) are disordered. Over residues 441-462 (MSDDDDEKEEDTEDEGEKEGKD) the composition is skewed to acidic residues.

As to quaternary structure, found in a mRNA splicing-dependent exon junction complex (EJC). Binds specifically histones H3 and H4.

The protein localises to the nucleus. It is found in the nucleolus. Its function is as follows. Chromatin-associated protein which contributes to the modulation of chromatin structure (such as super-helical structure of DNA) and function. Binds to chromatin of protein-coding genes throughout the genome to regulate nucleosome occupancy and chromatin accessibility, and to modulate the expression of target genes. In Arabidopsis thaliana (Mouse-ear cress), this protein is DEK domain-containing chromatin-associated protein 1.